The following is a 34-amino-acid chain: Egg-releasing peptide (34 aa).

In Aplysia californica (California sea hare), this protein is Egg-releasing peptide.